Here is a 499-residue protein sequence, read N- to C-terminus: Potassium voltage-gated channel subfamily A member 2 (499 aa).

Positions 1–27 (MTVATGDLTDGSVGFAGHPQDSYDPEP) are disordered. A tetramerization domain region spans residues 1-125 (MTVATGDLTD…YELGEEAMEI (125 aa)). Over 1-160 (MTVATGDLTD…LLFEYPESSG (160 aa)) the chain is Cytoplasmic. Residues 161–182 (PARIIAIISVTVILISIVSFCL) form a helical membrane-spanning segment. Topologically, residues 183–221 (ETLPVFRDENEDMHGSGGNYYSYPNSTVRFQKSNTFTDP) are extracellular. N207 carries N-linked (GlcNAc...) asparagine glycosylation. A helical membrane pass occupies residues 222 to 243 (FFIVETLCIIWFSFEFLVRFLA). Residue C244 is the site of S-palmitoyl cysteine attachment. The Cytoplasmic segment spans residues 244-254 (CPSKAVFFTNL). A helical transmembrane segment spans residues 255 to 275 (MNIIDIVAIIPYFITLGTELA). Residues 276-289 (EKTEDGQQGQQAMS) lie on the Extracellular side of the membrane. The chain crosses the membrane as a helical; Voltage-sensor span at residues 290–310 (LAILRVIRLVRVFRIFKLSRH). Over 311–325 (SKGLQILGQTLNASM) the chain is Cytoplasmic. The tract at residues 312 to 325 (KGLQILGQTLNASM) is S4-S5 linker. Residues 326 to 347 (RELGLLIFFLFIGVILFSSAVF) traverse the membrane as a helical segment. Residues 348–361 (FAEADERDSQFPSI) lie on the Extracellular side of the membrane. Residues 362–373 (PDAFWWAVVSMT) constitute an intramembrane region (helical). Positions 374 to 379 (TVGYGD) match the Selectivity filter motif. An intramembrane segment occupies 374–381 (TVGYGDMV). The Extracellular portion of the chain corresponds to 382–388 (PTTIGGK). The helical transmembrane segment at 389–417 (IVGSLCAIAGVLTIALPVPVIVSNFNYFY) threads the bilayer. The Cytoplasmic portion of the chain corresponds to 418–499 (HRETEGEEQA…VNITKMLTDV (82 aa)). A PDZ-binding motif is present at residues 497 to 499 (TDV).

It belongs to the potassium channel family. A (Shaker) (TC 1.A.1.2) subfamily. Kv1.2/KCNA2 sub-subfamily. In terms of assembly, homotetramer and heterotetramer with other family members. As to expression, detected in tadpole brain and spinal cord.

It localises to the cell membrane. It catalyses the reaction K(+)(in) = K(+)(out). Its function is as follows. Voltage-gated potassium channel that mediates transmembrane potassium transport in excitable membranes, primarily in the brain and central nervous system. Prevents aberrant action potential firing and regulates neuronal output. Forms tetrameric potassium-selective channels through which potassium ions pass in accordance with their electrochemical gradient. The channel alternates between opened and closed conformations in response to the voltage difference across the membrane. Can form functional homotetrameric channels and heterotetrameric channels with other family members; the channels characteristics depend critically on the types of channel-forming alpha subunits that are present. Channel properties are modulated by cytoplasmic beta subunits that regulate the subcellular location of the alpha subunits. In vivo, membranes probably contain a mixture of heteromeric potassium channel complexes, making it difficult to assign currents observed in intact tissues to any particular potassium channel family member. Homotetrameric KCNA2 forms a delayed-rectifier potassium channel that opens in response to membrane depolarization, followed by slow spontaneous channel closure. Regulates neuronal excitability and plays a role as pacemaker in the regulation of neuronal action potentials. KCNA2-containing channels play a presynaptic role and prevent hyperexcitability and aberrant action potential firing. Response to toxins that are selective for KCNA2-containing potassium channels suggests that in Purkinje cells, dendritic subthreshold KCNA2-containing potassium channels prevent random spontaneous calcium spikes, suppressing dendritic hyperexcitability without hindering the generation of somatic action potentials, and thereby play an important role in motor coordination. Plays a role in the induction of long-term potentiation of neuron excitability in the CA3 layer of the hippocampus. The chain is Potassium voltage-gated channel subfamily A member 2 (kcna2) from Xenopus laevis (African clawed frog).